The primary structure comprises 536 residues: CTP synthase (536 aa).

An amidoligase domain region spans residues 1-267; that stretch reads MSKFVFVTGG…CKETLRCLDL (267 aa). S13 contributes to the CTP binding site. S13 is a binding site for UTP. Residues 14–19 and D71 contribute to the ATP site; that span reads SIGKGI. Residues D71 and E141 each coordinate Mg(2+). CTP is bound by residues 148 to 150, 188 to 193, and K224; these read DIE and KTKPTQ. UTP contacts are provided by residues 188 to 193 and K224; that span reads KTKPTQ. The 243-residue stretch at 292 to 534 folds into the Glutamine amidotransferase type-1 domain; the sequence is KVALVGKYIE…IKASREKLEQ (243 aa). G354 contacts L-glutamine. The active-site Nucleophile; for glutamine hydrolysis is the C381. Residues 382 to 385, E405, and R462 contribute to the L-glutamine site; that span reads LGMQ. Catalysis depends on residues H507 and E509.

This sequence belongs to the CTP synthase family. As to quaternary structure, homotetramer.

It catalyses the reaction UTP + L-glutamine + ATP + H2O = CTP + L-glutamate + ADP + phosphate + 2 H(+). The enzyme catalyses L-glutamine + H2O = L-glutamate + NH4(+). It carries out the reaction UTP + NH4(+) + ATP = CTP + ADP + phosphate + 2 H(+). Its pathway is pyrimidine metabolism; CTP biosynthesis via de novo pathway; CTP from UDP: step 2/2. Allosterically activated by GTP, when glutamine is the substrate; GTP has no effect on the reaction when ammonia is the substrate. The allosteric effector GTP functions by stabilizing the protein conformation that binds the tetrahedral intermediate(s) formed during glutamine hydrolysis. Inhibited by the product CTP, via allosteric rather than competitive inhibition. Functionally, catalyzes the ATP-dependent amination of UTP to CTP with either L-glutamine or ammonia as the source of nitrogen. Regulates intracellular CTP levels through interactions with the four ribonucleotide triphosphates. In Prochlorococcus marinus (strain MIT 9515), this protein is CTP synthase.